The primary structure comprises 396 residues: Elongation factor Tu (396 aa).

In terms of domain architecture, tr-type G spans 10-206 (KPHVNVGTIG…VLDTYIPEPE (197 aa)). A G1 region spans residues 19–26 (GHVDHGKT). 19 to 26 (GHVDHGKT) lines the GTP pocket. Thr-26 is a binding site for Mg(2+). Residues 60 to 64 (GITIN) form a G2 region. The interval 81–84 (DCPG) is G3. GTP-binding positions include 81-85 (DCPGH) and 136-139 (NKCD). The tract at residues 136–139 (NKCD) is G4. The segment at 174-176 (SAT) is G5.

It belongs to the TRAFAC class translation factor GTPase superfamily. Classic translation factor GTPase family. EF-Tu/EF-1A subfamily. In terms of assembly, monomer.

Its subcellular location is the cytoplasm. It catalyses the reaction GTP + H2O = GDP + phosphate + H(+). GTP hydrolase that promotes the GTP-dependent binding of aminoacyl-tRNA to the A-site of ribosomes during protein biosynthesis. In Psychrobacter cryohalolentis (strain ATCC BAA-1226 / DSM 17306 / VKM B-2378 / K5), this protein is Elongation factor Tu.